The following is a 1143-amino-acid chain: FH2 domain-containing protein 1 (1143 aa).

The segment at 16-89 is disordered; sequence GNIATAPGFM…PPTTHMNGYS (74 aa). 2 stretches are compositionally biased toward pro residues: residues 29–46 and 56–80; these read TPPP…PSPP and SSPP…PGLP. The 396-residue stretch at 87–482 folds into the FH2 domain; it reads GYSHLGKKKR…QLQRLKEQEQ (396 aa). Ser500 is modified (phosphoserine). The interval 517 to 638 is disordered; it reads PFLHPRPISP…NHASAFPRAR (122 aa). The segment covering 521–534 has biased composition (low complexity); it reads PRPISPSSPSYRPP. Phosphoserine is present on residues Ser650, Ser660, and Ser664. Residues 706-1143 form a disordered region; sequence LESVGHRGPQ…LGRILNPLRK (438 aa). Low complexity predominate over residues 806 to 818; sequence GSMSSGVGEMGDS. The span at 848–861 shows a compositional bias: basic and acidic residues; sequence LPRDKPTKRKDVVA. Over residues 925 to 947 the composition is skewed to polar residues; the sequence is RGPSQNPPSSTDTVWSRQNSVRR. A compositionally biased stretch (low complexity) spans 958–968; sequence PRGSSGSSSTR. An MTBD; microtubule-binding domain region spans residues 960–1086; it reads GSSGSSSTRP…DAAPKDSSTL (127 aa). Basic and acidic residues predominate over residues 995–1018; the sequence is QKPEENKTCRAHSEGPESPKEEPK. Polar residues predominate over residues 1036-1046; sequence ARNTVASSSRS. Basic and acidic residues-rich tracts occupy residues 1071–1080 and 1117–1130; these read VKGDPEDAAP and GAGE…KDSS.

Interacts with CEP170.

It is found in the cell projection. Its subcellular location is the cilium. The protein localises to the golgi apparatus. Microtubule-associated formin which regulates both actin and microtubule dynamics. Induces microtubule acetylation and stabilization and actin stress fiber formation. Regulates Golgi ribbon formation. Required for normal cilia assembly. Early in cilia assembly, may assist in the maturation and positioning of the centrosome/basal body, and once cilia assembly has initiated, may also promote cilia elongation by inhibiting disassembly. The chain is FH2 domain-containing protein 1 (FHDC1) from Homo sapiens (Human).